We begin with the raw amino-acid sequence, 293 residues long: Putative phosphoenolpyruvate synthase regulatory protein (293 aa).

ADP is bound at residue 173–180 (GVSRCGKT).

The protein belongs to the pyruvate, phosphate/water dikinase regulatory protein family. PSRP subfamily.

It catalyses the reaction [pyruvate, water dikinase] + ADP = [pyruvate, water dikinase]-phosphate + AMP + H(+). It carries out the reaction [pyruvate, water dikinase]-phosphate + phosphate + H(+) = [pyruvate, water dikinase] + diphosphate. Its function is as follows. Bifunctional serine/threonine kinase and phosphorylase involved in the regulation of the phosphoenolpyruvate synthase (PEPS) by catalyzing its phosphorylation/dephosphorylation. The polypeptide is Putative phosphoenolpyruvate synthase regulatory protein (Photorhabdus laumondii subsp. laumondii (strain DSM 15139 / CIP 105565 / TT01) (Photorhabdus luminescens subsp. laumondii)).